A 134-amino-acid chain; its full sequence is Ribosome-binding factor A (134 aa).

It belongs to the RbfA family. As to quaternary structure, monomer. Binds 30S ribosomal subunits, but not 50S ribosomal subunits or 70S ribosomes.

The protein localises to the cytoplasm. Functionally, one of several proteins that assist in the late maturation steps of the functional core of the 30S ribosomal subunit. Associates with free 30S ribosomal subunits (but not with 30S subunits that are part of 70S ribosomes or polysomes). Required for efficient processing of 16S rRNA. May interact with the 5'-terminal helix region of 16S rRNA. The protein is Ribosome-binding factor A of Bartonella bacilliformis (strain ATCC 35685 / KC583 / Herrer 020/F12,63).